We begin with the raw amino-acid sequence, 429 residues long: CinA-like protein (429 aa).

The protein belongs to the CinA family.

The sequence is that of CinA-like protein from Prochlorococcus marinus (strain MIT 9313).